The sequence spans 134 residues: Small ribosomal subunit protein bS16 (134 aa).

Residues 105–134 (QNERREKRLAIKTRRRQAKKAAEAEGQESA) form a disordered region. Over residues 114-123 (AIKTRRRQAK) the composition is skewed to basic residues.

This sequence belongs to the bacterial ribosomal protein bS16 family.

This Chlorobium phaeobacteroides (strain BS1) protein is Small ribosomal subunit protein bS16.